The following is a 443-amino-acid chain: Ribosomal protein uS12 methylthiotransferase RimO (443 aa).

The MTTase N-terminal domain occupies 11–121; sequence PTVGFVSLGC…VMEAVHGALP (111 aa). 6 residues coordinate [4Fe-4S] cluster: Cys-20, Cys-56, Cys-85, Cys-152, Cys-156, and Cys-159. Residues 138 to 375 enclose the Radical SAM core domain; the sequence is LTPRHYAYLK…METQAEISAA (238 aa). In terms of domain architecture, TRAM spans 378–443; it reads DAKIGRTIEV…DAHDLWATPV (66 aa).

The protein belongs to the methylthiotransferase family. RimO subfamily. The cofactor is [4Fe-4S] cluster.

Its subcellular location is the cytoplasm. The catalysed reaction is L-aspartate(89)-[ribosomal protein uS12]-hydrogen + (sulfur carrier)-SH + AH2 + 2 S-adenosyl-L-methionine = 3-methylsulfanyl-L-aspartate(89)-[ribosomal protein uS12]-hydrogen + (sulfur carrier)-H + 5'-deoxyadenosine + L-methionine + A + S-adenosyl-L-homocysteine + 2 H(+). Functionally, catalyzes the methylthiolation of an aspartic acid residue of ribosomal protein uS12. In Thiobacillus denitrificans (strain ATCC 25259 / T1), this protein is Ribosomal protein uS12 methylthiotransferase RimO.